The primary structure comprises 363 residues: Phosphoserine aminotransferase (363 aa).

Arg46 lines the L-glutamate pocket. Pyridoxal 5'-phosphate is bound by residues 80 to 81, Trp106, Thr156, Asp176, and Gln199; that span reads AT. An N6-(pyridoxal phosphate)lysine modification is found at Lys200. 241 to 242 lines the pyridoxal 5'-phosphate pocket; that stretch reads NT.

The protein belongs to the class-V pyridoxal-phosphate-dependent aminotransferase family. SerC subfamily. In terms of assembly, homodimer. Requires pyridoxal 5'-phosphate as cofactor.

It localises to the cytoplasm. The enzyme catalyses O-phospho-L-serine + 2-oxoglutarate = 3-phosphooxypyruvate + L-glutamate. The catalysed reaction is 4-(phosphooxy)-L-threonine + 2-oxoglutarate = (R)-3-hydroxy-2-oxo-4-phosphooxybutanoate + L-glutamate. It functions in the pathway amino-acid biosynthesis; L-serine biosynthesis; L-serine from 3-phospho-D-glycerate: step 2/3. It participates in cofactor biosynthesis; pyridoxine 5'-phosphate biosynthesis; pyridoxine 5'-phosphate from D-erythrose 4-phosphate: step 3/5. In terms of biological role, catalyzes the reversible conversion of 3-phosphohydroxypyruvate to phosphoserine and of 3-hydroxy-2-oxo-4-phosphonooxybutanoate to phosphohydroxythreonine. This Leptospira interrogans serogroup Icterohaemorrhagiae serovar copenhageni (strain Fiocruz L1-130) protein is Phosphoserine aminotransferase.